Reading from the N-terminus, the 205-residue chain is Proteasome subunit beta type-3 (205 aa).

Serine 2 carries the N-acetylserine modification. Lysine 77 carries the N6-acetyllysine modification.

Belongs to the peptidase T1B family. The 26S proteasome consists of a 20S proteasome core and two 19S regulatory subunits. The 20S proteasome core is a barrel-shaped complex made of 28 subunits that are arranged in four stacked rings. The two outer rings are each formed by seven alpha subunits, and the two inner rings are formed by seven beta subunits. The proteolytic activity is exerted by three beta-subunits PSMB5, PSMB6 and PSMB7.

It is found in the cytoplasm. It localises to the nucleus. In terms of biological role, non-catalytic component of the 20S core proteasome complex involved in the proteolytic degradation of most intracellular proteins. This complex plays numerous essential roles within the cell by associating with different regulatory particles. Associated with two 19S regulatory particles, forms the 26S proteasome and thus participates in the ATP-dependent degradation of ubiquitinated proteins. The 26S proteasome plays a key role in the maintenance of protein homeostasis by removing misfolded or damaged proteins that could impair cellular functions, and by removing proteins whose functions are no longer required. Associated with the PA200 or PA28, the 20S proteasome mediates ubiquitin-independent protein degradation. This type of proteolysis is required in several pathways including spermatogenesis (20S-PA200 complex) or generation of a subset of MHC class I-presented antigenic peptides (20S-PA28 complex). The protein is Proteasome subunit beta type-3 (PSMB3) of Bos taurus (Bovine).